The following is a 430-amino-acid chain: Histidine--tRNA ligase (430 aa).

Belongs to the class-II aminoacyl-tRNA synthetase family. As to quaternary structure, homodimer.

It localises to the cytoplasm. It carries out the reaction tRNA(His) + L-histidine + ATP = L-histidyl-tRNA(His) + AMP + diphosphate + H(+). This is Histidine--tRNA ligase from Acinetobacter baumannii (strain SDF).